The primary structure comprises 445 residues: DDB1- and CUL4-associated factor 13 (445 aa).

Lys49 carries the N6-acetyllysine modification. WD repeat units lie at residues Gly64 to Thr104, Ala107 to Glu146, Pro149 to Ser191, Trp194 to Lys234, Ile236 to Met276, Asp280 to Val319, and Lys323 to Val362. Positions Lys353–Val441 are required for nucleolar location.

This sequence belongs to the WD repeat DCAF13/WDSOF1 family. As to quaternary structure, part of the small subunit (SSU) processome, composed of more than 70 proteins and the RNA chaperone small nucleolar RNA (snoRNA) U3. Component of the DCX(DCAF13) E3 ubiquitin ligase complex, at least composed of CUL4 (CUL4A or CUL4B), DDB1, DCAF13 and RBX1. Interacts (via WD40 domain) with DDB1. Interacts with ESR1 and LATS1. In terms of tissue distribution, expressed in the endometrium during decidualization. Expression is down-regulated in preeclampsia decidual tissues.

It localises to the nucleus. Its subcellular location is the nucleolus. Its pathway is protein modification; protein ubiquitination. Functionally, part of the small subunit (SSU) processome, first precursor of the small eukaryotic ribosomal subunit. During the assembly of the SSU processome in the nucleolus, many ribosome biogenesis factors, an RNA chaperone and ribosomal proteins associate with the nascent pre-rRNA and work in concert to generate RNA folding, modifications, rearrangements and cleavage as well as targeted degradation of pre-ribosomal RNA by the RNA exosome. Participates in the 18S rRNA processing in growing oocytes, being essential for oocyte nonsurrounded nucleolus (NSN) to surrounded nucleolus (SN) transition. In terms of biological role, substrate-recognition component of a DCX (DDB1-CUL4-X-box) E3 ubiquitin-protein ligase complex that plays a key role in embryo preimplantation and is required for normal meiotic cycle progression in oocytes. Acts as a maternal factor that regulates oocyte and zygotic chromatin tightness during maternal to zygotic transition. Also involved in the transformation of the endometrium into the decidua, known as decidualization, providing a solid foundation for implantation of blastocysts. Recognizes the histone methyltransferases SUV39H1 and SUV39H2 and directs them to polyubiquitination and proteasomal degradation, which facilitates the H3K9me3 removal and early zygotic gene expression, essential steps for progressive genome reprogramming and the establishment of pluripotency during preimplantation embryonic development. Supports the spindle assembly and chromosome condensation during oocyte meiotic division by targeting the polyubiquitination and degradation of PTEN, a lipid phosphatase that inhibits PI3K pathway as well as oocyte growth and maturation. Targets PMP22 for polyubiquitination and proteasomal degradation. This Homo sapiens (Human) protein is DDB1- and CUL4-associated factor 13.